Consider the following 154-residue polypeptide: Large ribosomal subunit protein eL24 (154 aa).

Residues 92–154 (AKRNQKPEVR…AAAPRVGGKR (63 aa)) form a disordered region. Residues 96–122 (QKPEVRKAQREQAVKAAKEKKKADQVG) are compositionally biased toward basic and acidic residues. Residues 129-154 (KARATAPKTKAPKTVKAAAPRVGGKR) are compositionally biased toward low complexity.

It belongs to the eukaryotic ribosomal protein eL24 family.

This chain is Large ribosomal subunit protein eL24 (RPL24), found in Branchiostoma belcheri (Amphioxus).